A 395-amino-acid polypeptide reads, in one-letter code: Subtilisin-like protease 9 (395 aa).

The signal sequence occupies residues 1-20 (MGFFRTLFSFSIFALSLADT). Positions 21 to 120 (SKFIGLDDVD…ADRVVKMAAL (100 aa)) are excised as a propeptide. Residues 36–117 (SYIVVMKGAV…YVEADRVVKM (82 aa)) enclose the Inhibitor I9 domain. The Peptidase S8 domain maps to 128-395 (SWGLGRISHK…RRLLYNGSGA (268 aa)). Catalysis depends on charge relay system residues Asp-160 and His-191. Asn-252 is a glycosylation site (N-linked (GlcNAc...) asparagine). Residue Ser-341 is the Charge relay system of the active site. N-linked (GlcNAc...) asparagine glycosylation occurs at Asn-391.

Belongs to the peptidase S8 family.

Its subcellular location is the secreted. In terms of biological role, secreted subtilisin-like serine protease with keratinolytic activity that contributes to pathogenicity. The polypeptide is Subtilisin-like protease 9 (SUB9) (Arthroderma otae (strain ATCC MYA-4605 / CBS 113480) (Microsporum canis)).